The following is a 160-amino-acid chain: Ribosomal RNA large subunit methyltransferase H (160 aa).

S-adenosyl-L-methionine contacts are provided by residues leucine 76, glycine 108, and phenylalanine 127 to phenylalanine 132.

It belongs to the RNA methyltransferase RlmH family. As to quaternary structure, homodimer.

Its subcellular location is the cytoplasm. It carries out the reaction pseudouridine(1915) in 23S rRNA + S-adenosyl-L-methionine = N(3)-methylpseudouridine(1915) in 23S rRNA + S-adenosyl-L-homocysteine + H(+). Specifically methylates the pseudouridine at position 1915 (m3Psi1915) in 23S rRNA. The polypeptide is Ribosomal RNA large subunit methyltransferase H (Methylocella silvestris (strain DSM 15510 / CIP 108128 / LMG 27833 / NCIMB 13906 / BL2)).